A 436-amino-acid polypeptide reads, in one-letter code: Trigger factor (436 aa).

The region spanning 163–248 (GDRVTVDFEG…LKKIEAAHLP (86 aa)) is the PPIase FKBP-type domain.

This sequence belongs to the FKBP-type PPIase family. Tig subfamily.

The protein resides in the cytoplasm. It catalyses the reaction [protein]-peptidylproline (omega=180) = [protein]-peptidylproline (omega=0). Involved in protein export. Acts as a chaperone by maintaining the newly synthesized protein in an open conformation. Functions as a peptidyl-prolyl cis-trans isomerase. The chain is Trigger factor from Albidiferax ferrireducens (strain ATCC BAA-621 / DSM 15236 / T118) (Rhodoferax ferrireducens).